The primary structure comprises 82 residues: Small ribosomal subunit protein eS21z (82 aa).

At Met-1 the chain carries N-acetylmethionine.

This sequence belongs to the eukaryotic ribosomal protein eS21 family.

In Arabidopsis thaliana (Mouse-ear cress), this protein is Small ribosomal subunit protein eS21z (RPS21B).